Reading from the N-terminus, the 388-residue chain is MRFITAGESHGPELTAIIEGLPAGLPLSSEEINRELARRQGGYGRGGRMKIEKDQVRITSGIRHGKTLGSPVTLIVENKDWKNWTSVMSVEPVPEKQKKIRRVSKPRPGHADLVGGMKYQHDDLRNVLERSSARETTMRVAIGAVAKKLLAELDIQVAGHVAVLGGIEATIPENLTIREIQERSEQSAVRVLDPSVEEKMKELIDQTKKNGDTIGGVVEVLVGGVPAGLGSYVQWDRKLDAKIAQAVVSINAFKGAEFGIGFEMAQRPGSQVMDEIVWDESTGYTRTSNNLGGFEGGMTNGMPIIVRGVMKPIPTLYKPLQSVNIDTKEPYKASVERSDSTAVPAASVVCEAVVATEVAKAMLEKFDSDSFEQMKEAVKRYRLYTQNF.

Residues R39 and R45 each contribute to the NADP(+) site. Positions E95–G115 are disordered. Residues K98–P108 show a composition bias toward basic residues. FMN is bound by residues R130 to S132, N251 to A252, G296, K311 to T315, and R337.

It belongs to the chorismate synthase family. Homotetramer. It depends on FMNH2 as a cofactor.

It catalyses the reaction 5-O-(1-carboxyvinyl)-3-phosphoshikimate = chorismate + phosphate. The protein operates within metabolic intermediate biosynthesis; chorismate biosynthesis; chorismate from D-erythrose 4-phosphate and phosphoenolpyruvate: step 7/7. Catalyzes the anti-1,4-elimination of the C-3 phosphate and the C-6 proR hydrogen from 5-enolpyruvylshikimate-3-phosphate (EPSP) to yield chorismate, which is the branch point compound that serves as the starting substrate for the three terminal pathways of aromatic amino acid biosynthesis. This reaction introduces a second double bond into the aromatic ring system. The sequence is that of Chorismate synthase from Enterococcus faecalis (strain ATCC 700802 / V583).